Here is a 305-residue protein sequence, read N- to C-terminus: 3-methyl-2-oxobutanoate hydroxymethyltransferase (305 aa).

The Mg(2+) site is built by aspartate 52 and aspartate 95. Residues 52–53 (DS), aspartate 95, and lysine 125 each bind 3-methyl-2-oxobutanoate. Glutamate 127 contacts Mg(2+). Glutamate 194 serves as the catalytic Proton acceptor.

The protein belongs to the PanB family. Homodecamer; pentamer of dimers. Requires Mg(2+) as cofactor.

The protein resides in the cytoplasm. The enzyme catalyses 3-methyl-2-oxobutanoate + (6R)-5,10-methylene-5,6,7,8-tetrahydrofolate + H2O = 2-dehydropantoate + (6S)-5,6,7,8-tetrahydrofolate. Its pathway is cofactor biosynthesis; (R)-pantothenate biosynthesis; (R)-pantoate from 3-methyl-2-oxobutanoate: step 1/2. In terms of biological role, catalyzes the reversible reaction in which hydroxymethyl group from 5,10-methylenetetrahydrofolate is transferred onto alpha-ketoisovalerate to form ketopantoate. This chain is 3-methyl-2-oxobutanoate hydroxymethyltransferase, found in Anaeromyxobacter sp. (strain Fw109-5).